Here is a 124-residue protein sequence, read N- to C-terminus: Small ribosomal subunit protein uS12 (124 aa).

The disordered stretch occupies residues 1 to 25 (MPTFNQLVRNGRKPPRWKTSSPALE). Asp-89 is modified (3-methylthioaspartic acid). Positions 104 to 124 (TAGVANRKQSRSKYGAKRPKS) are disordered. Residues 111–124 (KQSRSKYGAKRPKS) are compositionally biased toward basic residues.

The protein belongs to the universal ribosomal protein uS12 family. In terms of assembly, part of the 30S ribosomal subunit. Contacts proteins S8 and S17. May interact with IF1 in the 30S initiation complex.

In terms of biological role, with S4 and S5 plays an important role in translational accuracy. Functionally, interacts with and stabilizes bases of the 16S rRNA that are involved in tRNA selection in the A site and with the mRNA backbone. Located at the interface of the 30S and 50S subunits, it traverses the body of the 30S subunit contacting proteins on the other side and probably holding the rRNA structure together. The combined cluster of proteins S8, S12 and S17 appears to hold together the shoulder and platform of the 30S subunit. The polypeptide is Small ribosomal subunit protein uS12 (Solibacter usitatus (strain Ellin6076)).